We begin with the raw amino-acid sequence, 834 residues long: MNLTRREFAKANAAAIAAAAAGLPILVRASNLVTEADVTSLVWNKAPCRFCGTGCSVMVATRDGQVVATHGDIKAEVNRGINCVKGYFLSKIMYGSDRLTRPLLRMKDGKFDKQGEFQPISWEQAFDIMAEKFKAALKAKGPESVGMFGSGQWTVWEGYAANKLFKAGLRSNNIDPNARHCMASAVMGFMRSFGMDEPMGCYDDIEATDSFVLWGSNMAEMHPVLWSRVTDRRLSAPQVKVAVLSTFEHRSFELADLPMVFKPQTDLIILNYIANHIIESGAVNRDFVERHVRFAHGAEDIGYGLRPDDPLEKKAKNADKANTWSDIDFKAFAEFVKPYTLERTARESGVPAERLKALAELYADPKRKVVSFWTMGFNQHTRGVWANNLIYNIHLLTGKISEPGNSPFSLTGQPSACGTAREVGTFSHRLPADLVVTNPKHRETAEKIWKVPAGTIQEKVGFHAVQQSRMLKDGVLNVYWTQVSNNMQAGPNVMQEVLPGWRNPDNFVIVSDVYPTVSAQAADLILPSAMWVEKEGAFGNAERRTQFWHQLVKAPGEAKSDLWQLVEFSKRFTTDEVWPAELLAKAPELKGKTLYDVLFRNGQVDRFPASDLAKGYANDEVDAFGFYIQKGLFEEYAAFGRGHGHDLAPFDAYHEARGLRWPVVDGKETRWRYREGYDPYVSKGSGVQFYGYPDKKAIAFALPYEPPAEAPDQDYPFWLATGRVLEHWHTGSMTARVPELYKAVPDALVYMHPEDARQLKLRRGSEVKVVSRRGEIRARVETRGRNKPPQGLVFVPFFDANKLINKVTLDATDPISKQTDYKKCAVRIELLNLA.

Positions 1–29 (MNLTRREFAKANAAAIAAAAAGLPILVRA) form a signal peptide, tat-type signal. The 4Fe-4S Mo/W bis-MGD-type domain occupies 41-97 (LVWNKAPCRFCGTGCSVMVATRDGQVVATHGDIKAEVNRGINCVKGYFLSKIMYGSD). Residues Cys48, Cys51, Cys55, and Cys83 each contribute to the [4Fe-4S] cluster site. Residues Lys85, Gln152, Asn177, Cys181, 214–221 (WGSNMAEM), 245–249 (STFEH), 264–266 (QTD), Met375, Gln379, Asn485, 511–512 (SD), Lys534, Asp561, and 721–730 (TGRVLEHWHT) contribute to the Mo-bis(molybdopterin guanine dinucleotide) site. Residue Phe797 participates in substrate binding. Residues Asn805 and Lys822 each contribute to the Mo-bis(molybdopterin guanine dinucleotide) site.

It belongs to the prokaryotic molybdopterin-containing oxidoreductase family. NasA/NapA/NarB subfamily. In terms of assembly, component of the periplasmic nitrate reductase NapAB complex composed of NapA and NapB. [4Fe-4S] cluster serves as cofactor. Requires Mo-bis(molybdopterin guanine dinucleotide) as cofactor. In terms of processing, predicted to be exported by the Tat system. The position of the signal peptide cleavage has not been experimentally proven.

It localises to the periplasm. The catalysed reaction is 2 Fe(II)-[cytochrome] + nitrate + 2 H(+) = 2 Fe(III)-[cytochrome] + nitrite + H2O. In terms of biological role, catalytic subunit of the periplasmic nitrate reductase complex NapAB. Receives electrons from NapB and catalyzes the reduction of nitrate to nitrite. The protein is Periplasmic nitrate reductase of Pseudomonas aeruginosa (strain LESB58).